We begin with the raw amino-acid sequence, 316 residues long: L-lactate dehydrogenase (316 aa).

NAD(+) is bound by residues V15, D37, K42, Y68, and 82–83; that span reads GL. Residues Q85, R91, and 123–126 contribute to the substrate site; that span reads NPVD. Residues 121–123 and T146 each bind NAD(+); that span reads ASN. Residue 151 to 154 coordinates substrate; the sequence is DTSR. 2 residues coordinate beta-D-fructose 1,6-bisphosphate: R156 and H171. Catalysis depends on H178, which acts as the Proton acceptor. A Phosphotyrosine modification is found at Y222. T231 contributes to the substrate binding site.

Belongs to the LDH/MDH superfamily. LDH family. In terms of assembly, homotetramer.

The protein resides in the cytoplasm. It carries out the reaction (S)-lactate + NAD(+) = pyruvate + NADH + H(+). It participates in fermentation; pyruvate fermentation to lactate; (S)-lactate from pyruvate: step 1/1. With respect to regulation, allosterically activated by fructose 1,6-bisphosphate (FBP). Functionally, catalyzes the conversion of lactate to pyruvate. The protein is L-lactate dehydrogenase of Borrelia turicatae (strain 91E135).